We begin with the raw amino-acid sequence, 239 residues long: Large ribosomal subunit protein eL32 (239 aa).

2 stretches are compositionally biased toward acidic residues: residues 1–12 and 67–91; these read MSDENDTPEELA and VEAD…ADVE. Disordered regions lie at residues 1-23 and 64-178; these read MSDE…SKAE and GLEV…HPSG. Over residues 92-113 the composition is skewed to basic and acidic residues; it reads TELRARGLTEKTPDLSEDEQRL. Basic residues predominate over residues 130 to 155; the sequence is YHKKKRTPTSWRRPKGTLSKQRRGIK.

This sequence belongs to the eukaryotic ribosomal protein eL32 family.

The sequence is that of Large ribosomal subunit protein eL32 (rpl32e) from Halobacterium salinarum (strain ATCC 700922 / JCM 11081 / NRC-1) (Halobacterium halobium).